Reading from the N-terminus, the 93-residue chain is Large ribosomal subunit protein uL23cz/uL23cy (93 aa).

The protein belongs to the universal ribosomal protein uL23 family. In terms of assembly, part of the 50S ribosomal subunit.

The protein resides in the plastid. It is found in the chloroplast. Binds to 23S rRNA. The protein is Large ribosomal subunit protein uL23cz/uL23cy (rpl23-A) of Lotus japonicus (Lotus corniculatus var. japonicus).